The following is an 87-amino-acid chain: Small ribosomal subunit protein bS20 (87 aa).

The disordered stretch occupies residues 1 to 22 (MANIKSQIKRIGTNKKAQERNK).

Belongs to the bacterial ribosomal protein bS20 family.

Binds directly to 16S ribosomal RNA. This Clavibacter michiganensis subsp. michiganensis (strain NCPPB 382) protein is Small ribosomal subunit protein bS20.